The primary structure comprises 362 residues: Porin Omp2b (362 aa).

A signal peptide spans 1 to 22; that stretch reads MNIKSLLLGSAAALVAASGAQA.

This sequence belongs to the alphaproteobacteria porin family. As to quaternary structure, homotrimer.

The protein resides in the cell outer membrane. Its function is as follows. Forms passive diffusion pores that allow small molecular weight hydrophilic materials across the outer membrane. This is Porin Omp2b (omp2b) from Brucella abortus (strain S19).